A 246-amino-acid polypeptide reads, in one-letter code: Apolipoprotein L domain-containing protein 1 (246 aa).

2 helical membrane passes run 50-72 (SLAA…IVGL) and 89-109 (GLGV…SLIF). Positions 193–220 (LKAKIQKLSESLESCTGALDELSEQLES) form a coiled coil.

The protein belongs to the apolipoprotein L family. Present at low levels in brain vascular cells (at protein level).

It is found in the cell membrane. It localises to the cell junction. The protein resides in the cytoplasmic vesicle. Its subcellular location is the secretory vesicle. In terms of biological role, is a modulator of endothelial barrier permeability, required for proper organization of endothelial cell-cell junctions and cytoskeleton. It also plays a role in the modulation of secretory autophagy. May affect blood-brain barrier permeability. The chain is Apolipoprotein L domain-containing protein 1 (Apold1) from Rattus norvegicus (Rat).